Here is a 187-residue protein sequence, read N- to C-terminus: uncharacterized protein (187 aa).

The N-myristoyl glycine; by host moiety is linked to residue glycine 2.

It belongs to the mimivirus L332/L333/L334 family.

This is an uncharacterized protein from Acanthamoeba polyphaga (Amoeba).